A 175-amino-acid polypeptide reads, in one-letter code: Peptide deformylase (175 aa).

Positions 99 and 141 each coordinate Fe cation. E142 is an active-site residue. A Fe cation-binding site is contributed by H145.

This sequence belongs to the polypeptide deformylase family. It depends on Fe(2+) as a cofactor.

It catalyses the reaction N-terminal N-formyl-L-methionyl-[peptide] + H2O = N-terminal L-methionyl-[peptide] + formate. In terms of biological role, removes the formyl group from the N-terminal Met of newly synthesized proteins. Requires at least a dipeptide for an efficient rate of reaction. N-terminal L-methionine is a prerequisite for activity but the enzyme has broad specificity at other positions. This is Peptide deformylase from Rickettsia canadensis (strain McKiel).